We begin with the raw amino-acid sequence, 965 residues long: Serine/threonine-protein kinase tousled-like 1 (965 aa).

Disordered regions lie at residues Met-1 to Arg-22, Pro-35 to Asp-72, Gln-95 to Ser-120, Asn-172 to Arg-292, Gln-320 to Arg-402, and Arg-538 to Ile-576. Residues Val-10–Glu-21 are compositionally biased toward gly residues. Over residues Thr-42 to His-52 the composition is skewed to polar residues. The segment covering Asn-172–Gln-231 has biased composition (low complexity). Composition is skewed to polar residues over residues Val-233–Ser-244 and Gln-320–Ser-341. The span at Gln-342–Asn-355 shows a compositional bias: low complexity. Positions Leu-365–Tyr-381 are enriched in polar residues. Residues Ser-382–Gly-401 are compositionally biased toward low complexity. Over residues Ala-552–Gly-572 the composition is skewed to polar residues. Phosphoserine is present on Ser-634. Residues Tyr-651–Phe-928 enclose the Protein kinase domain. ATP is bound by residues Leu-657–Val-665 and Lys-680. The active-site Proton acceptor is the Asp-781.

This sequence belongs to the protein kinase superfamily. Ser/Thr protein kinase family. As to quaternary structure, interacts with air-2. In terms of processing, autophosphorylates in vitro. Phosphorylation on Ser-634 by air-2 enhances catalytic activity.

It is found in the nucleus. It carries out the reaction L-seryl-[protein] + ATP = O-phospho-L-seryl-[protein] + ADP + H(+). It catalyses the reaction L-threonyl-[protein] + ATP = O-phospho-L-threonyl-[protein] + ADP + H(+). Functionally, essential for appropriate transcription during embryonic development. May act during transcription elongation to activate the RNA polymerase II large subunit (ama-1) by phosphorylating the Ser-2 residues of the C-terminal domain 7-residue repeats. Does not phosphorylate histone H3. The chain is Serine/threonine-protein kinase tousled-like 1 (tlk-1) from Caenorhabditis elegans.